The chain runs to 156 residues: 3-hydroxyacyl-[acyl-carrier-protein] dehydratase FabZ (156 aa).

His62 is a catalytic residue.

Belongs to the thioester dehydratase family. FabZ subfamily.

Its subcellular location is the cytoplasm. The enzyme catalyses a (3R)-hydroxyacyl-[ACP] = a (2E)-enoyl-[ACP] + H2O. Its function is as follows. Involved in unsaturated fatty acids biosynthesis. Catalyzes the dehydration of short chain beta-hydroxyacyl-ACPs and long chain saturated and unsaturated beta-hydroxyacyl-ACPs. The polypeptide is 3-hydroxyacyl-[acyl-carrier-protein] dehydratase FabZ (Parasynechococcus marenigrum (strain WH8102)).